The sequence spans 295 residues: Light-independent protochlorophyllide reductase iron-sulfur ATP-binding protein (295 aa).

ATP contacts are provided by residues 39–44 (GIGKST) and Lys68. Mg(2+) is bound at residue Ser43. [4Fe-4S] cluster is bound by residues Cys124 and Cys158. Residue 209 to 210 (NR) participates in ATP binding.

The protein belongs to the NifH/BchL/ChlL family. In terms of assembly, homodimer. Protochlorophyllide reductase is composed of three subunits; ChlL, ChlN and ChlB. [4Fe-4S] cluster is required as a cofactor.

The enzyme catalyses chlorophyllide a + oxidized 2[4Fe-4S]-[ferredoxin] + 2 ADP + 2 phosphate = protochlorophyllide a + reduced 2[4Fe-4S]-[ferredoxin] + 2 ATP + 2 H2O. It participates in porphyrin-containing compound metabolism; chlorophyll biosynthesis (light-independent). Functionally, component of the dark-operative protochlorophyllide reductase (DPOR) that uses Mg-ATP and reduced ferredoxin to reduce ring D of protochlorophyllide (Pchlide) to form chlorophyllide a (Chlide). This reaction is light-independent. The L component serves as a unique electron donor to the NB-component of the complex, and binds Mg-ATP. This is Light-independent protochlorophyllide reductase iron-sulfur ATP-binding protein from Prochlorococcus marinus (strain MIT 9515).